Consider the following 139-residue polypeptide: D-ribose pyranase (139 aa).

H20 (proton donor) is an active-site residue. Residues D28, H106, and 128–130 contribute to the substrate site; that span reads YAN.

This sequence belongs to the RbsD / FucU family. RbsD subfamily. Homodecamer.

It localises to the cytoplasm. It catalyses the reaction beta-D-ribopyranose = beta-D-ribofuranose. It functions in the pathway carbohydrate metabolism; D-ribose degradation; D-ribose 5-phosphate from beta-D-ribopyranose: step 1/2. Functionally, catalyzes the interconversion of beta-pyran and beta-furan forms of D-ribose. The sequence is that of D-ribose pyranase from Escherichia coli O45:K1 (strain S88 / ExPEC).